A 205-amino-acid polypeptide reads, in one-letter code: Casparian strip membrane protein 4 (205 aa).

Over 1–58 (MDIEKTGSRREEEEPIVQKPKLEKGKGKAHVFAPPMNYSRIMEKHKQEKVSMAGWKRG) the chain is Cytoplasmic. Residues 59 to 79 (VAIFDFVLRLIAAITAMAAAA) form a helical membrane-spanning segment. Residues 80–109 (KMATTEETLPFFTQFLQFSADYTDLPTLSS) lie on the Extracellular side of the membrane. The helical transmembrane segment at 110-130 (FVIVNSIVGGYLTLSLPFSIV) threads the bilayer. Residues 131–148 (CILRPLAVPPRLFLILCD) lie on the Cytoplasmic side of the membrane. A helical membrane pass occupies residues 149–169 (TAMMGLTMVAASASAAIVYLA). Residues 170–205 (HNGNSSSNWLPVCQQFGDFCKERVAPWWLPLLQRLF) are Extracellular-facing. Residue N173 is glycosylated (N-linked (GlcNAc...) asparagine).

Belongs to the Casparian strip membrane proteins (CASP) family. In terms of assembly, homodimer and heterodimers.

It localises to the cell membrane. Regulates membrane-cell wall junctions and localized cell wall deposition. Required for establishment of the Casparian strip membrane domain (CSD) and the subsequent formation of Casparian strips, a cell wall modification of the root endodermis that determines an apoplastic barrier between the intraorganismal apoplasm and the extraorganismal apoplasm and prevents lateral diffusion. In Raphanus sativus (Radish), this protein is Casparian strip membrane protein 4.